The chain runs to 236 residues: UPF0257 lipoprotein YnfC (236 aa).

A signal peptide spans 1-16 (MKYKLLPCLLAILLTG). Residue C17 is the site of N-palmitoyl cysteine attachment. A lipid anchor (S-diacylglycerol cysteine) is attached at C17.

The protein belongs to the UPF0257 family.

It is found in the cell membrane. This chain is UPF0257 lipoprotein YnfC, found in Escherichia coli O45:K1 (strain S88 / ExPEC).